The primary structure comprises 312 residues: Ribonuclease Z (312 aa).

Residues His62, His64, Asp66, His67, His144, Asp215, and His273 each coordinate Zn(2+). The Proton acceptor role is filled by Asp66.

It belongs to the RNase Z family. Homodimer. Zn(2+) is required as a cofactor.

The catalysed reaction is Endonucleolytic cleavage of RNA, removing extra 3' nucleotides from tRNA precursor, generating 3' termini of tRNAs. A 3'-hydroxy group is left at the tRNA terminus and a 5'-phosphoryl group is left at the trailer molecule.. In terms of biological role, zinc phosphodiesterase, which displays some tRNA 3'-processing endonuclease activity. Probably involved in tRNA maturation, by removing a 3'-trailer from precursor tRNA. This chain is Ribonuclease Z, found in Prochlorococcus marinus (strain MIT 9515).